Reading from the N-terminus, the 241-residue chain is Probable transcriptional regulatory protein Mpe_A1337 (241 aa).

Residues M1–K20 are disordered.

This sequence belongs to the TACO1 family.

The protein localises to the cytoplasm. In Methylibium petroleiphilum (strain ATCC BAA-1232 / LMG 22953 / PM1), this protein is Probable transcriptional regulatory protein Mpe_A1337.